The following is a 95-amino-acid chain: Neutrophil antibiotic peptide NP-5 (95 aa).

The signal sequence occupies residues 1–19 (MRTLALLAAILLVTLQAQA). Residues 20–62 (ELHSGMADDGVDQQQPRAQDLDVAVYIKQDETSPLEVLGAKAG) constitute a propeptide that is removed on maturation. Cystine bridges form between Cys-65–Cys-93, Cys-67–Cys-82, and Cys-72–Cys-92.

It belongs to the alpha-defensin family.

It localises to the secreted. Microbicidal activity. The protein is Neutrophil antibiotic peptide NP-5 of Oryctolagus cuniculus (Rabbit).